Consider the following 360-residue polypeptide: Probable arginine kinase ZC434.8 (360 aa).

The region spanning 10–92 (SIEEVYTKLQ…FNPVIEEYHN (83 aa)) is the Phosphagen kinase N-terminal domain. A substrate-binding site is contributed by 65–69 (GVGIY). Residues 122-359 (FIVSTRIRCG…KKLIELEKAA (238 aa)) form the Phosphagen kinase C-terminal domain. Residues 125 to 129 (STRIR) and H189 each bind ATP. Position 229 (E229) interacts with substrate. Position 233 (R233) interacts with ATP. C275 is a binding site for substrate. ATP is bound by residues 284 to 288 (RASVH), 312 to 317 (RGIHGE), and D327. E317 is a substrate binding site.

The protein belongs to the ATP:guanido phosphotransferase family.

The catalysed reaction is L-arginine + ATP = N(omega)-phospho-L-arginine + ADP + H(+). The polypeptide is Probable arginine kinase ZC434.8 (Caenorhabditis elegans).